We begin with the raw amino-acid sequence, 436 residues long: GTPase Der (436 aa).

EngA-type G domains are found at residues 4 to 167 (PTVA…PTEA) and 175 to 351 (IKFS…QSQN). GTP-binding positions include 10–17 (GRPNVGKS), 57–61 (DTGGI), 119–122 (NKVD), 181–188 (GRPNVGKS), 229–233 (DTAGM), and 294–297 (NKWD). The KH-like domain maps to 352-436 (TRIPSAVLND…PIRLIARKRK (85 aa)).

This sequence belongs to the TRAFAC class TrmE-Era-EngA-EngB-Septin-like GTPase superfamily. EngA (Der) GTPase family. As to quaternary structure, associates with the 50S ribosomal subunit.

Functionally, GTPase that plays an essential role in the late steps of ribosome biogenesis. The protein is GTPase Der of Streptococcus mutans serotype c (strain ATCC 700610 / UA159).